A 458-amino-acid chain; its full sequence is Phosphoglucosamine mutase (458 aa).

S100 functions as the Phosphoserine intermediate in the catalytic mechanism. Mg(2+)-binding residues include S100, D239, D241, and D243. S100 bears the Phosphoserine mark.

It belongs to the phosphohexose mutase family. Requires Mg(2+) as cofactor. Post-translationally, activated by phosphorylation.

It catalyses the reaction alpha-D-glucosamine 1-phosphate = D-glucosamine 6-phosphate. Functionally, catalyzes the conversion of glucosamine-6-phosphate to glucosamine-1-phosphate. This Dictyoglomus thermophilum (strain ATCC 35947 / DSM 3960 / H-6-12) protein is Phosphoglucosamine mutase.